We begin with the raw amino-acid sequence, 326 residues long: Olfactory receptor 11H1 (326 aa).

Residues 1–44 (MCPLTLQVTGLMNVSEPNSSFAFVNEFILQGFSCEWTIQIFLFS) lie on the Extracellular side of the membrane. 2 N-linked (GlcNAc...) asparagine glycosylation sites follow: asparagine 13 and asparagine 18. A helical membrane pass occupies residues 45 to 65 (LFTTTYALTITGNGAIAFVLW). Topologically, residues 66–72 (CDRRLHT) are cytoplasmic. The helical transmembrane segment at 73 to 93 (PMYMFLGNFSFLEIWYVSSTV) threads the bilayer. Residues 94-112 (PKMLVNFLSEKKNISFAGC) are Extracellular-facing. Asparagine 106 carries N-linked (GlcNAc...) asparagine glycosylation. A disulfide bond links cysteine 112 and cysteine 194. A helical membrane pass occupies residues 113–133 (FLQFYFFFSLGTSECLLLTVM). Residues 134-158 (AFDQYLAICRPLLYPNIMTGHLYAK) are Cytoplasmic-facing. The helical transmembrane segment at 159–179 (LVILCWVCGFLWFLIPIVLIS) threads the bilayer. Topologically, residues 180 to 216 (QMPFCGPNIIDHVVCDPGPRFALDCVSAPRIQLFCYT) are extracellular. The helical transmembrane segment at 217–237 (LSSLVIFGNFLFIIGSYTLVL) threads the bilayer. Residues 238–259 (KAMLGMPSSTGRHKAFSTCGSH) lie on the Cytoplasmic side of the membrane. The helical transmembrane segment at 260–280 (LAVVSLCYSSLMVMYVSPGLG) threads the bilayer. At 281 to 287 (HSTGMQK) the chain is on the extracellular side. Residues 288–308 (IETLFYAMVTPLFNPLIYSLQ) form a helical membrane-spanning segment. Residues 309–326 (NKEIKAALRKVLGSSNII) are Cytoplasmic-facing.

The protein belongs to the G-protein coupled receptor 1 family.

The protein localises to the cell membrane. In terms of biological role, odorant receptor. In Homo sapiens (Human), this protein is Olfactory receptor 11H1 (OR11H1).